The following is a 197-amino-acid chain: ATP-dependent Clp protease proteolytic subunit (197 aa).

Residue S98 is the Nucleophile of the active site. H123 is a catalytic residue.

Belongs to the peptidase S14 family. As to quaternary structure, fourteen ClpP subunits assemble into 2 heptameric rings which stack back to back to give a disk-like structure with a central cavity, resembling the structure of eukaryotic proteasomes.

Its subcellular location is the cytoplasm. The catalysed reaction is Hydrolysis of proteins to small peptides in the presence of ATP and magnesium. alpha-casein is the usual test substrate. In the absence of ATP, only oligopeptides shorter than five residues are hydrolyzed (such as succinyl-Leu-Tyr-|-NHMec, and Leu-Tyr-Leu-|-Tyr-Trp, in which cleavage of the -Tyr-|-Leu- and -Tyr-|-Trp bonds also occurs).. Cleaves peptides in various proteins in a process that requires ATP hydrolysis. Has a chymotrypsin-like activity. Plays a major role in the degradation of misfolded proteins. The sequence is that of ATP-dependent Clp protease proteolytic subunit from Pediococcus pentosaceus (strain ATCC 25745 / CCUG 21536 / LMG 10740 / 183-1w).